Consider the following 334-residue polypeptide: MSSAPCHTTVLREPAVDALLARAGPAPAGTWVDATFGRGGHTRLILCRLGPQGRLVAFDKDPEAIAEAMRITDARFSIRHQGFGQLGQLPAGSLAGVLMDLGVSSPQIDSPERGFSFRFDGPLDMRMDTTRGLSAADWLATADAGQIAQVLRDYGEERFAGLIAKAIVARRQARGPLARTAELADLVAGAVKTREPGQNPATRTFQALRIFINAELEELQQALAASLLVLQPGGRLVVLSFHSLEDRIVKQFIARHSRQPFDRRVPFAAPQAMQLLALARVRPDAAEVAANPRARSAIMRVAERTQAHGAERSDMRRAERPDARRAEHGEVLPP.

S-adenosyl-L-methionine is bound by residues 39-41 (GGH), aspartate 59, phenylalanine 83, aspartate 100, and glutamine 107. A disordered region spans residues 303 to 334 (ERTQAHGAERSDMRRAERPDARRAEHGEVLPP).

It belongs to the methyltransferase superfamily. RsmH family.

The protein localises to the cytoplasm. The catalysed reaction is cytidine(1402) in 16S rRNA + S-adenosyl-L-methionine = N(4)-methylcytidine(1402) in 16S rRNA + S-adenosyl-L-homocysteine + H(+). Specifically methylates the N4 position of cytidine in position 1402 (C1402) of 16S rRNA. In Verminephrobacter eiseniae (strain EF01-2), this protein is Ribosomal RNA small subunit methyltransferase H.